Reading from the N-terminus, the 228-residue chain is Cytochrome c oxidase subunit 2 (228 aa).

The Mitochondrial intermembrane segment spans residues Met-1–Gly-14. The helical transmembrane segment at Pro-15–Ala-45 threads the bilayer. Over Thr-46 to Val-59 the chain is Mitochondrial matrix. A helical transmembrane segment spans residues Glu-60–Leu-87. Over Met-88–Gln-228 the chain is Mitochondrial intermembrane. Cu cation is bound by residues His-162, Cys-197, Glu-199, Cys-201, His-205, and Met-208. Glu-199 serves as a coordination point for Mg(2+).

Belongs to the cytochrome c oxidase subunit 2 family. In terms of assembly, component of the cytochrome c oxidase (complex IV, CIV), a multisubunit enzyme composed of 14 subunits. The complex is composed of a catalytic core of 3 subunits MT-CO1, MT-CO2 and MT-CO3, encoded in the mitochondrial DNA, and 11 supernumerary subunits COX4I, COX5A, COX5B, COX6A, COX6B, COX6C, COX7A, COX7B, COX7C, COX8 and NDUFA4, which are encoded in the nuclear genome. The complex exists as a monomer or a dimer and forms supercomplexes (SCs) in the inner mitochondrial membrane with NADH-ubiquinone oxidoreductase (complex I, CI) and ubiquinol-cytochrome c oxidoreductase (cytochrome b-c1 complex, complex III, CIII), resulting in different assemblies (supercomplex SCI(1)III(2)IV(1) and megacomplex MCI(2)III(2)IV(2)). Found in a complex with TMEM177, COA6, COX18, COX20, SCO1 and SCO2. Interacts with TMEM177 in a COX20-dependent manner. Interacts with COX20. Interacts with COX16. It depends on Cu cation as a cofactor.

Its subcellular location is the mitochondrion inner membrane. The enzyme catalyses 4 Fe(II)-[cytochrome c] + O2 + 8 H(+)(in) = 4 Fe(III)-[cytochrome c] + 2 H2O + 4 H(+)(out). Functionally, component of the cytochrome c oxidase, the last enzyme in the mitochondrial electron transport chain which drives oxidative phosphorylation. The respiratory chain contains 3 multisubunit complexes succinate dehydrogenase (complex II, CII), ubiquinol-cytochrome c oxidoreductase (cytochrome b-c1 complex, complex III, CIII) and cytochrome c oxidase (complex IV, CIV), that cooperate to transfer electrons derived from NADH and succinate to molecular oxygen, creating an electrochemical gradient over the inner membrane that drives transmembrane transport and the ATP synthase. Cytochrome c oxidase is the component of the respiratory chain that catalyzes the reduction of oxygen to water. Electrons originating from reduced cytochrome c in the intermembrane space (IMS) are transferred via the dinuclear copper A center (CU(A)) of subunit 2 and heme A of subunit 1 to the active site in subunit 1, a binuclear center (BNC) formed by heme A3 and copper B (CU(B)). The BNC reduces molecular oxygen to 2 water molecules using 4 electrons from cytochrome c in the IMS and 4 protons from the mitochondrial matrix. This is Cytochrome c oxidase subunit 2 (MT-CO2) from Lycodon semicarinatus (Ryukyu odd-tooth snake).